The following is a 492-amino-acid chain: ATP synthase subunit beta, chloroplastic (492 aa).

Position 170–177 (170–177) interacts with ATP; the sequence is GGAGVGKT.

This sequence belongs to the ATPase alpha/beta chains family. F-type ATPases have 2 components, CF(1) - the catalytic core - and CF(0) - the membrane proton channel. CF(1) has five subunits: alpha(3), beta(3), gamma(1), delta(1), epsilon(1). CF(0) has four main subunits: a(1), b(1), b'(1) and c(9-12).

It is found in the plastid. The protein resides in the chloroplast thylakoid membrane. It carries out the reaction ATP + H2O + 4 H(+)(in) = ADP + phosphate + 5 H(+)(out). Functionally, produces ATP from ADP in the presence of a proton gradient across the membrane. The catalytic sites are hosted primarily by the beta subunits. The protein is ATP synthase subunit beta, chloroplastic of Psilotum nudum (Whisk fern).